The sequence spans 185 residues: Ribosome-recycling factor (185 aa).

It belongs to the RRF family.

The protein resides in the cytoplasm. Its function is as follows. Responsible for the release of ribosomes from messenger RNA at the termination of protein biosynthesis. May increase the efficiency of translation by recycling ribosomes from one round of translation to another. This Shewanella baltica (strain OS185) protein is Ribosome-recycling factor.